A 90-amino-acid chain; its full sequence is Small ribosomal subunit protein uS17 (90 aa).

This sequence belongs to the universal ribosomal protein uS17 family. As to quaternary structure, part of the 30S ribosomal subunit.

In terms of biological role, one of the primary rRNA binding proteins, it binds specifically to the 5'-end of 16S ribosomal RNA. The chain is Small ribosomal subunit protein uS17 from Paraburkholderia phymatum (strain DSM 17167 / CIP 108236 / LMG 21445 / STM815) (Burkholderia phymatum).